A 204-amino-acid chain; its full sequence is dITP/XTP pyrophosphatase (204 aa).

Residue 8 to 13 coordinates substrate; sequence SNNAHK. Positions 41 and 76 each coordinate Mg(2+). Catalysis depends on Asp76, which acts as the Proton acceptor. Substrate contacts are provided by residues Ser77, 159–162, Lys182, and 187–188; these read FGYD and HR.

The protein belongs to the HAM1 NTPase family. As to quaternary structure, homodimer. Requires Mg(2+) as cofactor.

The enzyme catalyses XTP + H2O = XMP + diphosphate + H(+). It catalyses the reaction dITP + H2O = dIMP + diphosphate + H(+). The catalysed reaction is ITP + H2O = IMP + diphosphate + H(+). Its function is as follows. Pyrophosphatase that catalyzes the hydrolysis of nucleoside triphosphates to their monophosphate derivatives, with a high preference for the non-canonical purine nucleotides XTP (xanthosine triphosphate), dITP (deoxyinosine triphosphate) and ITP. Seems to function as a house-cleaning enzyme that removes non-canonical purine nucleotides from the nucleotide pool, thus preventing their incorporation into DNA/RNA and avoiding chromosomal lesions. This chain is dITP/XTP pyrophosphatase, found in Clostridium perfringens (strain 13 / Type A).